We begin with the raw amino-acid sequence, 450 residues long: Ribosomal protein uS12 methylthiotransferase RimO (450 aa).

The MTTase N-terminal domain maps to 9–124 (NRINVVTLGC…LLSALEADYK (116 aa)). [4Fe-4S] cluster contacts are provided by cysteine 18, cysteine 53, cysteine 87, cysteine 148, cysteine 152, and cysteine 155. Residues 134-365 (TTPKNYAYLK…EIQSQISWEL (232 aa)) form the Radical SAM core domain. The region spanning 367 to 434 (QQKIGEVFNV…DFDLYGEPLN (68 aa)) is the TRAM domain.

It belongs to the methylthiotransferase family. RimO subfamily. The cofactor is [4Fe-4S] cluster.

The protein resides in the cytoplasm. It catalyses the reaction L-aspartate(89)-[ribosomal protein uS12]-hydrogen + (sulfur carrier)-SH + AH2 + 2 S-adenosyl-L-methionine = 3-methylsulfanyl-L-aspartate(89)-[ribosomal protein uS12]-hydrogen + (sulfur carrier)-H + 5'-deoxyadenosine + L-methionine + A + S-adenosyl-L-homocysteine + 2 H(+). In terms of biological role, catalyzes the methylthiolation of an aspartic acid residue of ribosomal protein uS12. This is Ribosomal protein uS12 methylthiotransferase RimO from Christiangramia forsetii (strain DSM 17595 / CGMCC 1.15422 / KT0803) (Gramella forsetii).